Reading from the N-terminus, the 154-residue chain is Proteasome subunit beta type-4 (154 aa).

Residue methionine 1 is modified to N-acetylmethionine. Residues 1–45 constitute a propeptide that is removed on maturation; it reads MESILESRSGHWAGGPAPGQFYRIPPTPGSIVDPXSVLYGSPITR. Tyrosine 102 carries the post-translational modification Phosphotyrosine.

This sequence belongs to the peptidase T1B family. The 26S proteasome consists of a 20S proteasome core and two 19S regulatory subunits. The 20S proteasome core is a barrel-shaped complex made of 28 subunits that are arranged in four stacked rings. The two outer rings are each formed by seven alpha subunits, and the two inner rings are formed by seven beta subunits. The proteolytic activity is exerted by three beta-subunits PSMB5, PSMB6 and PSMB7. Forms a ternary complex with SMAD1 and OAZ1 before PSMB4 is incorporated into the 20S proteasome. Interacts with PRPF19.

Its subcellular location is the cytoplasm. It is found in the nucleus. Its function is as follows. Non-catalytic component of the 20S core proteasome complex involved in the proteolytic degradation of most intracellular proteins. This complex plays numerous essential roles within the cell by associating with different regulatory particles. Associated with two 19S regulatory particles, forms the 26S proteasome and thus participates in the ATP-dependent degradation of ubiquitinated proteins. The 26S proteasome plays a key role in the maintenance of protein homeostasis by removing misfolded or damaged proteins that could impair cellular functions, and by removing proteins whose functions are no longer required. Associated with the PA200 or PA28, the 20S proteasome mediates ubiquitin-independent protein degradation. This type of proteolysis is required in several pathways including spermatogenesis (20S-PA200 complex) or generation of a subset of MHC class I-presented antigenic peptides (20S-PA28 complex). SMAD1/OAZ1/PSMB4 complex mediates the degradation of the CREBBP/EP300 repressor SNIP1. The protein is Proteasome subunit beta type-4 (PSMB4) of Sus scrofa (Pig).